The chain runs to 173 residues: Crossover junction endodeoxyribonuclease RuvC (173 aa).

Catalysis depends on residues Asp-8, Glu-67, and Asp-139. Residues Asp-8, Glu-67, and Asp-139 each coordinate Mg(2+).

Belongs to the RuvC family. In terms of assembly, homodimer which binds Holliday junction (HJ) DNA. The HJ becomes 2-fold symmetrical on binding to RuvC with unstacked arms; it has a different conformation from HJ DNA in complex with RuvA. In the full resolvosome a probable DNA-RuvA(4)-RuvB(12)-RuvC(2) complex forms which resolves the HJ. Mg(2+) serves as cofactor.

It is found in the cytoplasm. The catalysed reaction is Endonucleolytic cleavage at a junction such as a reciprocal single-stranded crossover between two homologous DNA duplexes (Holliday junction).. Functionally, the RuvA-RuvB-RuvC complex processes Holliday junction (HJ) DNA during genetic recombination and DNA repair. Endonuclease that resolves HJ intermediates. Cleaves cruciform DNA by making single-stranded nicks across the HJ at symmetrical positions within the homologous arms, yielding a 5'-phosphate and a 3'-hydroxyl group; requires a central core of homology in the junction. The consensus cleavage sequence is 5'-(A/T)TT(C/G)-3'. Cleavage occurs on the 3'-side of the TT dinucleotide at the point of strand exchange. HJ branch migration catalyzed by RuvA-RuvB allows RuvC to scan DNA until it finds its consensus sequence, where it cleaves and resolves the cruciform DNA. The protein is Crossover junction endodeoxyribonuclease RuvC of Cronobacter sakazakii (strain ATCC BAA-894) (Enterobacter sakazakii).